A 54-amino-acid polypeptide reads, in one-letter code: Photosystem II reaction center protein K (54 aa).

Positions 1-17 are excised as a propeptide; it reads MSFITLNNFFNTNTFFG. Residues 29-49 form a helical membrane-spanning segment; the sequence is LIDVLPIIPVLFFLLAFVWQA.

Belongs to the PsbK family. PSII is composed of 1 copy each of membrane proteins PsbA, PsbB, PsbC, PsbD, PsbE, PsbF, PsbH, PsbI, PsbJ, PsbK, PsbL, PsbM, PsbT, PsbY, PsbZ, Psb30/Ycf12, at least 3 peripheral proteins of the oxygen-evolving complex and a large number of cofactors. It forms dimeric complexes.

It localises to the plastid. The protein localises to the chloroplast thylakoid membrane. In terms of biological role, one of the components of the core complex of photosystem II (PSII). PSII is a light-driven water:plastoquinone oxidoreductase that uses light energy to abstract electrons from H(2)O, generating O(2) and a proton gradient subsequently used for ATP formation. It consists of a core antenna complex that captures photons, and an electron transfer chain that converts photonic excitation into a charge separation. This is Photosystem II reaction center protein K from Euglena gracilis.